Reading from the N-terminus, the 682-residue chain is Potassium-transporting ATPase ATP-binding subunit (682 aa).

4 helical membrane passes run 35-55, 62-82, 219-239, and 254-274; these read VMFI…AMAG, ATFT…ANFA, IALT…TATI, and VLVA…LSAI. Asp307 serves as the catalytic 4-aspartylphosphate intermediate. Residues Asp344, Glu348, 377 to 384, and Lys395 contribute to the ATP site; that span reads FTAQTRMS. The Mg(2+) site is built by Asp518 and Asp522. A run of 3 helical transmembrane segments spans residues 588–608, 616–636, and 656–676; these read FAII…LNVM, AILS…PLAL, and IYGL…DLLL.

The protein belongs to the cation transport ATPase (P-type) (TC 3.A.3) family. Type IA subfamily. In terms of assembly, the system is composed of three essential subunits: KdpA, KdpB and KdpC.

It localises to the cell inner membrane. It catalyses the reaction K(+)(out) + ATP + H2O = K(+)(in) + ADP + phosphate + H(+). In terms of biological role, part of the high-affinity ATP-driven potassium transport (or Kdp) system, which catalyzes the hydrolysis of ATP coupled with the electrogenic transport of potassium into the cytoplasm. This subunit is responsible for energy coupling to the transport system and for the release of the potassium ions to the cytoplasm. The sequence is that of Potassium-transporting ATPase ATP-binding subunit from Klebsiella pneumoniae (strain 342).